The sequence spans 271 residues: Calcium-binding protein 4 (271 aa).

The disordered stretch occupies residues 1 to 105 (MATEHNVQLV…RSDPQQDAAQ (105 aa)). Serine 37 bears the Phosphoserine; by PKC/PRKCZ mark. Over residues 45 to 67 (GSQKASSGDQSSSQGSEASGSSK) the composition is skewed to low complexity. The span at 87–96 (ASHRHSHRHR) shows a compositional bias: basic residues. EF-hand domains are found at residues 125–160 (EELE…LGYM), 179–196 (GFVD…KLRE), 202–237 (LGVR…LLGE), and 239–271 (LEGT…LSTG). Residues aspartate 138, aspartate 140, aspartate 142, tyrosine 144, and glutamate 149 each coordinate Ca(2+). Ca(2+)-binding residues include aspartate 215, aspartate 217, aspartate 219, arginine 221, glutamate 226, aspartate 252, asparagine 254, aspartate 256, threonine 258, and glutamate 263.

In terms of assembly, interacts with CACNA1F and CACNA1D (via IQ domain) in a calcium independent manner. Interacts (via N-terminus) with UNC119. Phosphorylated. Phosphorylation levels change with the light conditions and regulate the activity, but has no effect on calcium binding. In terms of tissue distribution, expressed in retina and in the inner hair cells (IHC) of the cochlea.

It is found in the cytoplasm. Its subcellular location is the presynapse. Involved in normal synaptic function through regulation of Ca(2+) influx and neurotransmitter release in photoreceptor synaptic terminals and in auditory transmission. Modulator of CACNA1D and CACNA1F, suppressing the calcium-dependent inactivation and shifting the activation range to more hyperpolarized voltages. In Mus musculus (Mouse), this protein is Calcium-binding protein 4 (Cabp4).